Here is a 290-residue protein sequence, read N- to C-terminus: MVNHASMTAHLIDGKAIAASLRQQIAQRVVERRQQGLRTPGLAVILVGTDPASQVYVSHKRKDCEEVGFISQAFDLPSETTQQALTELIDRLNDDPAVDGILLQLPLPAHLDASLLLERIRPDKDVDGFHPYNIGRLAQRIPLLRPCTPKGIMTLLESTGQDLYGMNAVIVGASNIVGRPMAMELLLAGCTVTVCHRFTKDLAGHVGRADLVVVAAGKPGLVKGEWVKEGAIVIDVGINRQEDGKLVGDVVYETALPRAGWITPVPGGVGPMTRACLLENTLYAAEELHK.

NADP(+) is bound by residues glycine 172 to serine 174 and isoleucine 238.

Belongs to the tetrahydrofolate dehydrogenase/cyclohydrolase family. Homodimer.

The catalysed reaction is (6R)-5,10-methylene-5,6,7,8-tetrahydrofolate + NADP(+) = (6R)-5,10-methenyltetrahydrofolate + NADPH. It catalyses the reaction (6R)-5,10-methenyltetrahydrofolate + H2O = (6R)-10-formyltetrahydrofolate + H(+). It functions in the pathway one-carbon metabolism; tetrahydrofolate interconversion. In terms of biological role, catalyzes the oxidation of 5,10-methylenetetrahydrofolate to 5,10-methenyltetrahydrofolate and then the hydrolysis of 5,10-methenyltetrahydrofolate to 10-formyltetrahydrofolate. The protein is Bifunctional protein FolD 1 of Pseudomonas putida (strain GB-1).